The sequence spans 389 residues: S-adenosylmethionine synthase 2 (389 aa).

His17 provides a ligand contact to ATP. Asp19 provides a ligand contact to Mg(2+). Glu45 contacts K(+). Residues Glu58 and Gln102 each contribute to the L-methionine site. Positions 102 to 112 (QSADIAVGVDA) are flexible loop. Residues 166–168 (DSK), 231–232 (RF), Asp240, 246–247 (RK), Ala263, and Lys267 contribute to the ATP site. Residue Asp240 coordinates L-methionine. Position 271 (Lys271) interacts with L-methionine.

It belongs to the AdoMet synthase family. In terms of assembly, homotetramer; dimer of dimers. It depends on Mg(2+) as a cofactor. K(+) serves as cofactor.

The protein localises to the cytoplasm. It catalyses the reaction L-methionine + ATP + H2O = S-adenosyl-L-methionine + phosphate + diphosphate. The protein operates within amino-acid biosynthesis; S-adenosyl-L-methionine biosynthesis; S-adenosyl-L-methionine from L-methionine: step 1/1. Functionally, catalyzes the formation of S-adenosylmethionine (AdoMet) from methionine and ATP. The overall synthetic reaction is composed of two sequential steps, AdoMet formation and the subsequent tripolyphosphate hydrolysis which occurs prior to release of AdoMet from the enzyme. In Rhodospirillum rubrum (strain ATCC 11170 / ATH 1.1.1 / DSM 467 / LMG 4362 / NCIMB 8255 / S1), this protein is S-adenosylmethionine synthase 2.